The chain runs to 81 residues: U-poneritoxin(01)-Om6a (81 aa).

The N-terminal stretch at 1–21 (MRRSYVLLAFAIVLIISIISA) is a signal peptide. Residues 22-43 (QVEADASSDAFADAVADAVADP) constitute a propeptide that is removed on maturation. The residue at position 79 (alanine 79) is an Alanine amide.

Belongs to the formicidae venom precursor-01 superfamily. In terms of processing, truncated sequences of this peptide have also been found in the venom. It is possible they have been cleaved in the venom. Expressed by the venom gland.

It is found in the secreted. Cationic amphipathic alpha-helical peptide with antimicrobial activities against E.coli (MIC=3.1), and S.aureus (MIC=3.1 uM). Also shows histamine-releasing activity (33.6% at 10 uM). Does not have activity against S.cerevisiae. Does not show hemolytic activity, even at 50 uM. The sequence is that of U-poneritoxin(01)-Om6a from Odontomachus monticola (Trap-jaw ant).